The following is a 119-amino-acid chain: MORF4 family associated protein 1 like 2 (119 aa).

Residues 1–16 are compositionally biased toward basic and acidic residues; it reads MRPVDADEAREPREEP. The disordered stretch occupies residues 1–36; it reads MRPVDADEAREPREEPGSPLSPAPRAGRENLASLER.

It belongs to the MORF4 family-associated protein family. May interact with CDK2AP1.

Its function is as follows. May play a role in cell proliferation. The polypeptide is MORF4 family associated protein 1 like 2 (Homo sapiens (Human)).